The following is a 119-amino-acid chain: uncharacterized protein (119 aa).

Residues 1-22 (MQGQAGKRKTDGKVPSNTEQNC) form a disordered region.

This is an uncharacterized protein from Saccharomyces cerevisiae (strain ATCC 204508 / S288c) (Baker's yeast).